Here is a 246-residue protein sequence, read N- to C-terminus: 2,5-diamino-6-ribosylamino-4(3H)-pyrimidinone 5'-phosphate reductase (246 aa).

NADP(+) is bound by residues T78, D82, L163, and 186 to 190 (GAEVL).

The protein belongs to the HTP reductase family. In terms of assembly, homodimer.

It carries out the reaction 2,5-diamino-6-(1-D-ribitylamino)pyrimidin-4(3H)-one 5'-phosphate + NADP(+) = 2,5-diamino-6-(1-D-ribosylamino)pyrimidin-4(3H)-one 5'-phosphate + NADPH + H(+). It catalyses the reaction 2,5-diamino-6-(1-D-ribitylamino)pyrimidin-4(3H)-one 5'-phosphate + NAD(+) = 2,5-diamino-6-(1-D-ribosylamino)pyrimidin-4(3H)-one 5'-phosphate + NADH + H(+). It participates in cofactor biosynthesis; riboflavin biosynthesis. Functionally, catalyzes an early step in riboflavin biosynthesis, the NADPH-dependent reduction of the ribose side chain of 2,5-diamino-6-ribosylamino-4(3H)-pyrimidinone 5'-phosphate, yielding 2,5-diamino-6-ribitylamino-4(3H)-pyrimidinone 5'-phosphate. The protein is 2,5-diamino-6-ribosylamino-4(3H)-pyrimidinone 5'-phosphate reductase (RIB7) of Eremothecium gossypii (strain ATCC 10895 / CBS 109.51 / FGSC 9923 / NRRL Y-1056) (Yeast).